A 1012-amino-acid polypeptide reads, in one-letter code: Vacuolar protein-sorting protein bro-1 (1012 aa).

The BRO1 domain occupies 5-407 (PMISVPLKAT…ERVETANSEM (403 aa)). Residues 301–330 (ILADATKRHLATVKEKLEELNKENDMIYHQ) are a coiled coil. The tract at residues 558 to 578 (RKSRKSNPNSPATVEPNLLEA) is disordered. A coiled-coil region spans residues 719-775 (LQSAKNWYKDMRQEAESLEKNVEAFVNNRRAEGAQLLNQIEQDRAANKSSHAALEQE). Disordered regions lie at residues 784 to 812 (MSMD…SFAP) and 827 to 1012 (NFST…SAWK). A compositionally biased stretch (polar residues) spans 827-842 (NFSTQYPASPPATQVP). Residues 844 to 857 (NPGGQQQTPYQQYN) show a composition bias toward low complexity. Residues 892–913 (QTSFAQSRPYSLTTYGNPSALN) show a composition bias toward polar residues. The segment covering 914–930 (PQGGQPQQSQPGGYVPP) has biased composition (low complexity). A compositionally biased stretch (pro residues) spans 931-945 (GFVPPPPPPGPPPLG). Residues 970-985 (PGSGQQGPQGQQGGWG) are compositionally biased toward gly residues.

It belongs to the BRO1 family.

It localises to the cytoplasm. The protein resides in the endosome. Involved in concentration and sorting of cargo proteins of the multivesicular body (MVB) for incorporation into intralumenal vesicles. The sequence is that of Vacuolar protein-sorting protein bro-1 (bro-1) from Neurospora crassa (strain ATCC 24698 / 74-OR23-1A / CBS 708.71 / DSM 1257 / FGSC 987).